Consider the following 1487-residue polypeptide: Probable lysine-specific demethylase SE14 (1487 aa).

The disordered stretch occupies residues 1 to 23; it reads MPPQPPPAASASASAPDPAVPAW. The span at 9–22 shows a compositional bias: low complexity; it reads ASASASAPDPAVPA. The JmjN domain maps to 30-71; the sequence is APEYRPTESEFADPIAFLSRVEREAAAYGICKVIPPHPRPSR. Low complexity predominate over residues 86–104; sequence CDAPAPSPAAASDSSIPPS. Positions 86 to 113 are disordered; the sequence is CDAPAPSPAAASDSSIPPSSSSPPPVSA. Residues 232 to 398 enclose the JmjC domain; it reads NSPWNLQAIA…FAKEAAVRRA (167 aa). Fe cation-binding residues include His275, Glu277, and His366. Disordered regions lie at residues 494–555 and 684–718; these read SCSK…DDGD and YGDT…PDVE. Composition is skewed to basic and acidic residues over residues 498–507 and 542–551; these read APEKKGEDGP and QAPEGEKLDT. The C2H2-type 1; degenerate zinc-finger motif lies at 1377 to 1400; sequence FQCDIEFCDMTFETKAELRAHQRN. 3 consecutive C2H2-type zinc fingers follow at residues 1400–1424, 1430–1454, and 1460–1486; these read NICT…QCVH, FKCP…IRVH, and YKCS…KFNH.

Fe(2+) is required as a cofactor.

It is found in the nucleus. Histone demethylase that demethylates 'Lys-4' (H3K4me) of histone H3. Involved in the control of flowering time. Has a suppressive effect on floral transition under long day conditions through the demethylation of H3K4me3 in the promoter region of the flower-promoting signal HD3B/RFT1. This chain is Probable lysine-specific demethylase SE14 (SE14), found in Oryza sativa subsp. japonica (Rice).